Here is a 307-residue protein sequence, read N- to C-terminus: Fructokinase (307 aa).

Belongs to the carbohydrate kinase PfkB family.

It carries out the reaction D-fructose + ATP = D-fructose 6-phosphate + ADP + H(+). The sequence is that of Fructokinase (cscK) from Escherichia coli.